The sequence spans 612 residues: Dihydroxy-acid dehydratase (612 aa).

Residue aspartate 81 participates in Mg(2+) binding. Position 122 (cysteine 122) interacts with [2Fe-2S] cluster. Mg(2+) contacts are provided by aspartate 123 and lysine 124. Position 124 is an N6-carboxylysine (lysine 124). Position 193 (cysteine 193) interacts with [2Fe-2S] cluster. Glutamate 489 serves as a coordination point for Mg(2+). The active-site Proton acceptor is serine 515.

The protein belongs to the IlvD/Edd family. Homodimer. It depends on [2Fe-2S] cluster as a cofactor. Requires Mg(2+) as cofactor.

It carries out the reaction (2R)-2,3-dihydroxy-3-methylbutanoate = 3-methyl-2-oxobutanoate + H2O. The enzyme catalyses (2R,3R)-2,3-dihydroxy-3-methylpentanoate = (S)-3-methyl-2-oxopentanoate + H2O. The protein operates within amino-acid biosynthesis; L-isoleucine biosynthesis; L-isoleucine from 2-oxobutanoate: step 3/4. Its pathway is amino-acid biosynthesis; L-valine biosynthesis; L-valine from pyruvate: step 3/4. Its function is as follows. Functions in the biosynthesis of branched-chain amino acids. Catalyzes the dehydration of (2R,3R)-2,3-dihydroxy-3-methylpentanoate (2,3-dihydroxy-3-methylvalerate) into 2-oxo-3-methylpentanoate (2-oxo-3-methylvalerate) and of (2R)-2,3-dihydroxy-3-methylbutanoate (2,3-dihydroxyisovalerate) into 2-oxo-3-methylbutanoate (2-oxoisovalerate), the penultimate precursor to L-isoleucine and L-valine, respectively. The sequence is that of Dihydroxy-acid dehydratase from Xanthomonas axonopodis pv. citri (strain 306).